The chain runs to 95 residues: Large ribosomal subunit protein bL27 (95 aa).

A propeptide spanning residues 1–10 (MLLTMNLQLF) is cleaved from the precursor. Residues 12–38 (HKKGGGSTSNGRDSESKRLGAKSADGQ) form a disordered region.

The protein belongs to the bacterial ribosomal protein bL27 family. In terms of processing, the N-terminus is cleaved by ribosomal processing cysteine protease Prp.

This Enterococcus faecalis (strain ATCC 700802 / V583) protein is Large ribosomal subunit protein bL27.